Reading from the N-terminus, the 414-residue chain is Serine/threonine transporter SstT (414 aa).

The next 8 membrane-spanning stretches (helical) occupy residues 22–42 (GLVLGIVVALISAPLQETIGF), 54–74 (IFVKALRAVAPILIFFLVMAA), 89–109 (IIVLYLLGTFLAAFVAVIAGF), 148–168 (AIFKANFIGVLAWSIGLGLAL), 189–209 (IVHVIISFAPFGVFGLVAETL), 223–243 (LLAVLIGTMLFTAFVVNPILV), 305–325 (MAGAAITITILTLAAVHTLGL), and 337–357 (IVAALCACGASGVAGGSLLLI).

It belongs to the dicarboxylate/amino acid:cation symporter (DAACS) (TC 2.A.23) family.

It is found in the cell inner membrane. The enzyme catalyses L-serine(in) + Na(+)(in) = L-serine(out) + Na(+)(out). It carries out the reaction L-threonine(in) + Na(+)(in) = L-threonine(out) + Na(+)(out). Functionally, involved in the import of serine and threonine into the cell, with the concomitant import of sodium (symport system). The sequence is that of Serine/threonine transporter SstT from Haemophilus influenzae (strain 86-028NP).